The primary structure comprises 100 residues: Large ribosomal subunit protein uL23 (100 aa).

This sequence belongs to the universal ribosomal protein uL23 family. Part of the 50S ribosomal subunit. Contacts protein L29, and trigger factor when it is bound to the ribosome.

Functionally, one of the early assembly proteins it binds 23S rRNA. One of the proteins that surrounds the polypeptide exit tunnel on the outside of the ribosome. Forms the main docking site for trigger factor binding to the ribosome. This Mycolicibacterium vanbaalenii (strain DSM 7251 / JCM 13017 / BCRC 16820 / KCTC 9966 / NRRL B-24157 / PYR-1) (Mycobacterium vanbaalenii) protein is Large ribosomal subunit protein uL23.